The sequence spans 220 residues: Riboflavin kinase (220 aa).

The segment at 1 to 92 is H-T-H motif-like; that stretch reads METDDQYYRA…LSRILAIKNN (92 aa). The tract at residues 93-220 is riboflavin kinase; that stretch reads VVITGTVTSG…GDRVSVEVYT (128 aa). Residue 102–107 coordinates CDP; the sequence is GMGEGR. Residues Thr131 and Asn133 each contribute to the Mg(2+) site. Residues Thr188 and Glu195 each coordinate FMN. 200–203 is a CDP binding site; it reads KYLR.

This sequence belongs to the archaeal riboflavin kinase family. Mg(2+) serves as cofactor.

The enzyme catalyses riboflavin + CTP = CDP + FMN + H(+). It functions in the pathway cofactor biosynthesis; FMN biosynthesis; FMN from riboflavin (CTP route): step 1/1. Functionally, catalyzes the CTP-dependent phosphorylation of riboflavin (vitamin B2) to form flavin mononucleotide (FMN). The sequence is that of Riboflavin kinase (ribK) from Thermoplasma acidophilum (strain ATCC 25905 / DSM 1728 / JCM 9062 / NBRC 15155 / AMRC-C165).